The sequence spans 216 residues: Hydrogenase-4 component E (216 aa).

Residues 1–3 (MTG) are Periplasmic-facing. The chain crosses the membrane as a helical span at residues 4 to 24 (SMIVNNLAGLMMLTSLFVISV). Topologically, residues 25–38 (KSYRLSCGFYACQS) are cytoplasmic. Transmembrane regions (helical) follow at residues 39–59 (LVLVSIFATLSCLFAAEQLLI) and 60–80 (WSASAFITKVLLVPLIMTYAA). The Cytoplasmic portion of the chain corresponds to 81 to 92 (RNIPQNIPEKAL). The helical transmembrane segment at 93-113 (FGPAMMALLAALIVLLCAFVV) threads the bilayer. Residues 114 to 122 (QPVKLPMAT) are Periplasmic-facing. A helical transmembrane segment spans residues 123–143 (GLKPALAVALGHFLLGLLCIV). At 144–150 (SQRNILR) the chain is on the cytoplasmic side. The chain crosses the membrane as a helical span at residues 151–171 (QIFGYCLMENGSHLVLALLAW). Over 172–175 (RAPE) the chain is Periplasmic. A helical transmembrane segment spans residues 176 to 196 (LVEIGIATDAIFAVIVMVLLA). Topologically, residues 197–216 (RKIWRTHGTLDVNNLTALKG) are cytoplasmic.

Its subcellular location is the cell inner membrane. The protein is Hydrogenase-4 component E (hyfE) of Escherichia coli O157:H7.